The following is a 531-amino-acid chain: UDP-glucuronosyltransferase 1A7 (531 aa).

Residues 1 to 25 (MAPADVPASLPLGLCLLLASGFGHA) form the signal peptide. N71, N293, and N431 each carry an N-linked (GlcNAc...) asparagine glycan. A helical membrane pass occupies residues 487-503 (LDVIGFLLAIVLTVVFI).

It belongs to the UDP-glycosyltransferase family. Homodimer. Homooligomer. Interacts with UGT1A1, UGT1A3, UGT1A4, UGT1A6, UGT1A8, UGT1A9 and UGT1A10 to form heterodimers.

Its subcellular location is the endoplasmic reticulum membrane. It carries out the reaction glucuronate acceptor + UDP-alpha-D-glucuronate = acceptor beta-D-glucuronoside + UDP + H(+). It catalyses the reaction 17alpha-estradiol + UDP-alpha-D-glucuronate = 17alpha-estradiol 3-O-(beta-D-glucuronate) + UDP + H(+). The catalysed reaction is prunetin + UDP-alpha-D-glucuronate = prunetin-5-O-beta-D-glucuronide + UDP. The enzyme catalyses 5-epi-5-F2t-IsoP + UDP-alpha-D-glucuronate = 5-epi-5-F2t-IsoP-glucuronide + UDP + H(+). It carries out the reaction (E)-ferulate + UDP-alpha-D-glucuronate = (E)-ferulic acid beta-D-glucuronate ester + UDP. It catalyses the reaction candesartan + UDP-alpha-D-glucuronate = candesartan O-beta-D-glucuronoside + UDP. The catalysed reaction is SN-38 + UDP-alpha-D-glucuronate = SN-38 O-beta-D-glucuronide + UDP + H(+). The enzyme catalyses mycophenolate + UDP-alpha-D-glucuronate = mycophenolate 7-O-beta-D-glucuronide + UDP + H(+). Functionally, UDP-glucuronosyltransferase (UGT) that catalyzes phase II biotransformation reactions in which lipophilic substrates are conjugated with glucuronic acid to increase the metabolite's water solubility, thereby facilitating excretion into either the urine or bile. Essential for the elimination and detoxification of drugs, xenobiotics and endogenous compounds. Catalyzes the glucuronidation of endogenous estrogen hormone epiestradiol. Involved in the glucuronidation of F2-isoprostane (5-epi-5-F2t-IsoP). Involved in the glucuronidation of the phytochemical ferulic acid at the carboxylic acid group. Also catalyzes the glucuronidation of the isoflavones genistein, daidzein, glycitein, formononetin, biochanin A and prunetin, which are phytoestrogens with anticancer and cardiovascular properties. Involved in the glucuronidation of the AGTR1 angiotensin receptor antagonist caderastan, a drug which can inhibit the effect of angiotensin II. Involved in the biotransformation of 7-ethyl-10-hydroxycamptothecin (SN-38), the pharmacologically active metabolite of the anticancer drug irinotecan. Also metabolizes mycophenolate, an immunosuppressive agent. This chain is UDP-glucuronosyltransferase 1A7, found in Rattus norvegicus (Rat).